A 496-amino-acid polypeptide reads, in one-letter code: Putative zinc finger CCCH domain-containing protein 48 (496 aa).

2 disordered regions span residues 1–77 and 108–194; these read MADS…QPVH and MGAG…HPDD. Positions 143–156 are enriched in acidic residues; sequence HLAEEEEEEEEEHY. 3 consecutive C3H1-type zinc fingers follow at residues 377-406, 439-467, and 469-496; these read EHKT…HGED, KYKT…HGEV, and LGKK…RHSY.

This chain is Putative zinc finger CCCH domain-containing protein 48, found in Oryza sativa subsp. japonica (Rice).